The chain runs to 107 residues: MNIHVTDAAKQALQQAFDANPGKKAQLRYDAEGCGCAVSGVPTIWLAEELTGQCEQLETNGIPLYIQSSQKVFFDDQMTIDYNEKAKTLALKSPAEMLSPRMSILVK.

This is an uncharacterized protein from Bacillus subtilis (strain 168).